The chain runs to 966 residues: Aminopeptidase N (966 aa).

At 1 to 8 (MAKGFYIS) the chain is on the cytoplasmic side. The chain crosses the membrane as a helical; Signal-anchor for type II membrane protein span at residues 9 to 32 (KSLGILGILLGVAALCTIVALSVV). The segment at 33–65 (YRQEKNKNTSQSPSMAPLNPTATSSPATTLDQN) is cytosolic Ser/Thr-rich junction. Residues 33 to 966 (YRQEKNKNTS…VLAWFTANSA (934 aa)) are Extracellular-facing. Residues Asn-40 and Asn-125 are each glycosylated (N-linked (GlcNAc...) asparagine). The disordered stretch occupies residues 40 to 61 (NTSQSPSMAPLNPTATSSPATT). Residues 66–966 (LPWNRYRLPK…VLAWFTANSA (901 aa)) are metalloprotease. Tyr-173 carries the post-translational modification Sulfotyrosine. Asn-259 and Asn-315 each carry an N-linked (GlcNAc...) asparagine glycan. A substrate-binding site is contributed by 348–352 (GAMEN). His-384 is a binding site for Zn(2+). Glu-385 functions as the Proton acceptor in the catalytic mechanism. 2 residues coordinate Zn(2+): His-388 and Glu-407. 2 positions are modified to sulfotyrosine: Tyr-415 and Tyr-420. N-linked (GlcNAc...) asparagine glycans are attached at residues Asn-552, Asn-570, Asn-624, and Asn-734. Disulfide bonds link Cys-760/Cys-767 and Cys-797/Cys-833. Asn-817 carries an N-linked (GlcNAc...) asparagine glycan. Tyr-852 carries the post-translational modification Phosphotyrosine. The residue at position 912 (Tyr-912) is a Sulfotyrosine.

It belongs to the peptidase M1 family. Homodimer. Interacts with SLC6A19. The cofactor is Zn(2+). In terms of processing, sulfated. Post-translationally, N- and O-glycosylated. May undergo proteolysis and give rise to a soluble form.

The protein localises to the cell membrane. It catalyses the reaction Release of an N-terminal amino acid, Xaa-|-Yaa- from a peptide, amide or arylamide. Xaa is preferably Ala, but may be most amino acids including Pro (slow action). When a terminal hydrophobic residue is followed by a prolyl residue, the two may be released as an intact Xaa-Pro dipeptide.. Functionally, broad specificity aminopeptidase which plays a role in the final digestion of peptides generated from hydrolysis of proteins by gastric and pancreatic proteases. Also involved in the processing of various peptides including peptide hormones, such as angiotensin III and IV, neuropeptides, and chemokines. May also be involved the cleavage of peptides bound to major histocompatibility complex class II molecules of antigen presenting cells. May have a role in angiogenesis and promote cholesterol crystallization. May have a role in amino acid transport by acting as binding partner of amino acid transporter SLC6A19 and regulating its activity. The chain is Aminopeptidase N (ANPEP) from Oryctolagus cuniculus (Rabbit).